The following is a 709-amino-acid chain: MSRIIMLIPLNKKVSLTTISLSILYFFNKKEQKNCFKSFSYLPLIKSDNINFIRAYFSKKINVLDDINFFKKNFNSDEYSYLLDKIIKECFNKKKINEFILIKGISRKEHDDADQINFDIAQNIDAEVIFIDNLKDFSLGCFKRKERKINVFLQQKKYKNFLGLIFSDINSPFIFNKMKYNFFDKLIILKNTKKNTCIHAIKKNIFFNSFFRVIAFIPWNKKLVKSSVINIFKFLNATLVNTISIKDAFIKNITIFDEDSSVILKKSYANTLVLISSSRMETFFKTLYLVCKSKKIGAILLTGVLKLSENSIKLLKFLTNQGVPVFFIKENTVETLSQLQKFNFNINVQNKYFINKLLEYTSSFFNKNHLISLKKKTTNFYKKTYSPKEFCYRLKILSKSKHKRIILPESYEPRILKAASICHRLGIAECILLGDPKKIYNIANENKIDLNKNIEIKDPILIRDQYVPRLLEIRKNKKIDEIFARKQLKDNVILATLILESGKVDGLVSGTINTTANTIRPALQIIKTDPIYSLVSSIFFILLPNEVLIYGDCAINIEPNSKELAEIAIQSANSAKMFGIEPRIAMLSYSTGFSGTGWQVEKIRDATSIVKSKRPDLLIDGPIQYDAAISKEVAKLKIPYSSILGSANIFIFPDLNSGNITYKAVQRSADLICIGPMLQGLKKPVNDLSRGASVEDIVYTIALTSIQSL.

Positions 389 to 709 (EFCYRLKILS…TIALTSIQSL (321 aa)) are phosphate acetyltransferase.

It in the N-terminal section; belongs to the CobB/CobQ family. In the C-terminal section; belongs to the phosphate acetyltransferase and butyryltransferase family. Homohexamer.

It is found in the cytoplasm. The catalysed reaction is acetyl-CoA + phosphate = acetyl phosphate + CoA. Its pathway is metabolic intermediate biosynthesis; acetyl-CoA biosynthesis; acetyl-CoA from acetate: step 2/2. Functionally, involved in acetate metabolism. This chain is Phosphate acetyltransferase (pta), found in Buchnera aphidicola subsp. Schizaphis graminum (strain Sg).